The chain runs to 43 residues: METATIIVIFVSSLLLGITTYSVYTAFGPASKNLRDPFEEHED.

The helical transmembrane segment at 7–29 (IVIFVSSLLLGITTYSVYTAFGP) threads the bilayer.

This sequence belongs to the PsbN family.

It localises to the plastid. The protein resides in the chloroplast thylakoid membrane. In terms of biological role, may play a role in photosystem I and II biogenesis. The polypeptide is Protein PsbN (Phaeodactylum tricornutum (strain CCAP 1055/1)).